A 371-amino-acid polypeptide reads, in one-letter code: Fructose-1,6-bisphosphatase class 1 1 (371 aa).

The Mg(2+) site is built by E115, D134, L136, and D137. Substrate is bound by residues 137–140, N228, and 280–282; these read DGSS and YLY. E300 is a binding site for Mg(2+).

This sequence belongs to the FBPase class 1 family. As to quaternary structure, homotetramer. Mg(2+) is required as a cofactor.

It localises to the cytoplasm. It catalyses the reaction beta-D-fructose 1,6-bisphosphate + H2O = beta-D-fructose 6-phosphate + phosphate. It participates in carbohydrate biosynthesis; gluconeogenesis. The sequence is that of Fructose-1,6-bisphosphatase class 1 1 from Xanthobacter autotrophicus (strain ATCC BAA-1158 / Py2).